An 85-amino-acid polypeptide reads, in one-letter code: Small ribosomal subunit protein bS18 (85 aa).

This sequence belongs to the bacterial ribosomal protein bS18 family. In terms of assembly, part of the 30S ribosomal subunit. Forms a tight heterodimer with protein bS6.

Functionally, binds as a heterodimer with protein bS6 to the central domain of the 16S rRNA, where it helps stabilize the platform of the 30S subunit. In Helicobacter acinonychis (strain Sheeba), this protein is Small ribosomal subunit protein bS18.